The primary structure comprises 350 residues: Phosphate acyltransferase (350 aa).

Belongs to the PlsX family. Homodimer. Probably interacts with PlsY.

It localises to the cytoplasm. It carries out the reaction a fatty acyl-[ACP] + phosphate = an acyl phosphate + holo-[ACP]. Its pathway is lipid metabolism; phospholipid metabolism. Functionally, catalyzes the reversible formation of acyl-phosphate (acyl-PO(4)) from acyl-[acyl-carrier-protein] (acyl-ACP). This enzyme utilizes acyl-ACP as fatty acyl donor, but not acyl-CoA. The chain is Phosphate acyltransferase from Phenylobacterium zucineum (strain HLK1).